The sequence spans 365 residues: tRNA N6-adenosine threonylcarbamoyltransferase (365 aa).

The Fe cation site is built by His-119 and His-123. Residues 141–145 (LVSGG), Asp-174, Gly-187, and Asn-288 each bind substrate. Fe cation is bound at residue Asp-316.

Belongs to the KAE1 / TsaD family. Requires Fe(2+) as cofactor.

The protein resides in the cytoplasm. The enzyme catalyses L-threonylcarbamoyladenylate + adenosine(37) in tRNA = N(6)-L-threonylcarbamoyladenosine(37) in tRNA + AMP + H(+). In terms of biological role, required for the formation of a threonylcarbamoyl group on adenosine at position 37 (t(6)A37) in tRNAs that read codons beginning with adenine. Is involved in the transfer of the threonylcarbamoyl moiety of threonylcarbamoyl-AMP (TC-AMP) to the N6 group of A37, together with TsaE and TsaB. TsaD likely plays a direct catalytic role in this reaction. This is tRNA N6-adenosine threonylcarbamoyltransferase from Rhizobium etli (strain ATCC 51251 / DSM 11541 / JCM 21823 / NBRC 15573 / CFN 42).